Reading from the N-terminus, the 787-residue chain is ISWI one complex protein 3 (787 aa).

The span at methionine 1–glutamine 22 shows a compositional bias: polar residues. 3 disordered regions span residues methionine 1 to glutamine 137, isoleucine 672 to aspartate 693, and threonine 749 to threonine 787. A compositionally biased stretch (low complexity) spans aspartate 40–aspartate 50. Positions lysine 79–alanine 92 are enriched in basic residues. Over residues serine 100 to glutamine 137 the composition is skewed to basic and acidic residues. Over residues glutamine 675–proline 689 the composition is skewed to polar residues. Acidic residues predominate over residues tyrosine 751 to phenylalanine 777. The segment covering aspartate 778–threonine 787 has biased composition (basic and acidic residues).

Component of the ISW1A complex, which at least consists of ISW1 and IOC3.

It is found in the nucleus. Functionally, functions as a component of the ISW1A complex, which acts in remodeling the chromatin by catalyzing an ATP-dependent alteration in the structure of nucleosomal DNA. The ISW1A complex represses gene expression at initiation through specific positioning of a promoter proximal dinucleosome. This chain is ISWI one complex protein 3 (IOC3), found in Saccharomyces cerevisiae (strain ATCC 204508 / S288c) (Baker's yeast).